We begin with the raw amino-acid sequence, 445 residues long: UPF0210 protein SZO_15840 (445 aa).

This sequence belongs to the UPF0210 family. Homodimer.

The polypeptide is UPF0210 protein SZO_15840 (Streptococcus equi subsp. zooepidemicus (strain H70)).